A 266-amino-acid chain; its full sequence is Killer cell lectin-like receptor 6 (266 aa).

At 1–44 (MSEPEVTYSTVRLHKSSRLQKLVRHEETQGPREAGYRKCSVCWQ) the chain is on the cytoplasmic side. A helical; Signal-anchor for type II membrane protein membrane pass occupies residues 45–66 (LIVKALGILCFLLLITVAVLAV). Over 67–266 (KIFQYGQHNQ…CGKKLDKFPH (200 aa)) the chain is Extracellular. N-linked (GlcNAc...) asparagine glycans are attached at residues Asn-87 and Asn-104. The C-type lectin domain occupies 143–261 (GVKYWFCYRT…SHYCICGKKL (119 aa)). Disulfide bonds link Cys-149/Cys-154, Cys-167/Cys-255, Cys-171/Cys-257, and Cys-236/Cys-249.

Homodimer; disulfide-linked.

The protein localises to the membrane. Receptor on natural killer (NK) cells for class I MHC. The sequence is that of Killer cell lectin-like receptor 6 (Klra6) from Mus musculus (Mouse).